The following is a 983-amino-acid chain: Nuclear factor NF-kappa-B p105 subunit (983 aa).

The 326-residue stretch at proline 47–methionine 372 folds into the RHD domain. At cysteine 66 the chain carries S-nitrosocysteine. Serine 342 carries the post-translational modification Phosphoserine; by PKA. The Nuclear localization signal motif lies at glutamine 365–lysine 370. The GRR stretch occupies residues aspartate 377–glycine 397. Residues lysine 423–lysine 454 form a disordered region. Basic and acidic residues predominate over residues methionine 428 to lysine 454. 7 ANK repeats span residues asparagine 540–tyrosine 569, leucine 579–leucine 608, histidine 612–methionine 641, glutamate 648–alanine 677, serine 682–serine 712, aspartate 716–valine 745, and proline 769–glutamate 799. A Death domain is found at glutamine 804 to leucine 891. The residue at position 938 (serine 938) is a Phosphoserine.

As to quaternary structure, active NF-kappa-B is a heterodimer of an about 50 kDa DNA-binding subunit and the weak DNA-binding subunit p65. Two heterodimers might form a labile tetramer. Generation of the NF-kappa-B p50 (Nuclear factor NF-kappa-B p50 subunit) transcription factor takes place both cotranslationally and post-translationally via non-mutually exclusive mechanisms. A cotranslational processing allows the production of both p50 and p105 (Nuclear factor NF-kappa-B p105 subunit) from a single NFKB1 mRNA. While translation occurs, the particular unfolded structure after the GRR repeat region acts as a substrate for the proteasome, promoting degradation of the C-terminus. The GRR acts as a proteasomal 'stop signal', protecting the region upstream of the GRR from degradation and promoting generation of p50. It is unclear if limited proteasome degradation during cotranslational processing depends on ubiquitination. NF-kappa-B p50 is also generated post-translationally following ubiquitination by the KPC complex, leading to limited processing by the proteasome downstream of the GRR region, thereby generating p50. In terms of processing, phosphorylation at the C-terminus by IKBKB/IKKB acts as a signal for ubiquitination and promotes either complete degradation or processing to generate the NF-kappa-B p50 (Nuclear factor NF-kappa-B p50 subunit). Phosphorylation at Ser-938 are required for BTRC/BTRCP-mediated ubiquitination and proteolysis. Phosphorylation at Ser-938 is also required for ubiquitination by the KPC complex and limited processing to generate NF-kappa-B p50 (Nuclear factor NF-kappa-B p50 subunit). Post-translationally, polyubiquitinated at multiple Lys residues in the C-terminus. Polyubiquitinated by the SCF(FBXW11) and SCF(BTRC) complexes following phosphorylation at Ser-938, leading to its complete degradation. In contrast, polyubiquitination by the KPC complex following phosphorylation at Ser-938 leads to limited proteosomal processing and generation of the active NF-kappa-B p50 (Nuclear factor NF-kappa-B p50 subunit). S-nitrosylation of Cys-66 affects DNA binding. In terms of processing, the covalent modification of cysteine by 15-deoxy-Delta12,14-prostaglandin-J2 is autocatalytic and reversible. It may occur as an alternative to other cysteine modifications, such as S-nitrosylation and S-palmitoylation.

Its subcellular location is the cytoplasm. It is found in the nucleus. Functionally, P105 is the precursor of the active p50 subunit (Nuclear factor NF-kappa-B p50 subunit) of the nuclear factor NF-kappa-B. The precursor protein itself does not bind to DNA. Acts as a cytoplasmic retention of attached NF-kappa-B proteins by p105. In terms of biological role, constitutes the active form, which associates with RELA/p65 to form the NF-kappa-B p65-p50 complex to form a transcription factor. Together with RELA/p65, binds to the kappa-B consensus sequence 5'-GGRNNYYCC-3', located in the enhancer region of genes involved in immune response and acute phase reactions. The chain is Nuclear factor NF-kappa-B p105 subunit (NFKB1) from Gallus gallus (Chicken).